We begin with the raw amino-acid sequence, 86 residues long: UPF0297 protein CA_C1679 (86 aa).

Belongs to the UPF0297 family.

The protein is UPF0297 protein CA_C1679 of Clostridium acetobutylicum (strain ATCC 824 / DSM 792 / JCM 1419 / IAM 19013 / LMG 5710 / NBRC 13948 / NRRL B-527 / VKM B-1787 / 2291 / W).